Here is an 874-residue protein sequence, read N- to C-terminus: Chaperone protein ClpB 1 (874 aa).

Positions 6–148 (PNQFTEKAWE…RQIIQQIRGS (143 aa)) constitute a Clp R domain. Repeat regions lie at residues 9–73 (FTEK…IARQ) and 85–148 (LGRS…IRGS). The NBD1 stretch occupies residues 161–342 (EALEKYGRDL…RRFQQVFVDQ (182 aa)). Residue 208–215 (GEPGVGKT) coordinates ATP. The tract at residues 343–551 (PTVEDTISIL…IAEIISKWTG (209 aa)) is linker. Positions 393 to 527 (IDLVDESAAR…MEGGLATTHT (135 aa)) form a coiled coil. Positions 561-772 (EMQKLLNLDE…RVDETIIFHS (212 aa)) are NBD2. 611-618 (GPTGVGKT) lines the ATP pocket. The segment at 773 to 874 (LRKDQLQQIV…IATPTAVPLS (102 aa)) is C-terminal.

It belongs to the ClpA/ClpB family. In terms of assembly, homohexamer. The oligomerization is ATP-dependent.

Its subcellular location is the cytoplasm. In terms of biological role, part of a stress-induced multi-chaperone system, it is involved in the recovery of the cell from heat-induced damage, in cooperation with DnaK, DnaJ and GrpE. Acts before DnaK, in the processing of protein aggregates. Protein binding stimulates the ATPase activity; ATP hydrolysis unfolds the denatured protein aggregates, which probably helps expose new hydrophobic binding sites on the surface of ClpB-bound aggregates, contributing to the solubilization and refolding of denatured protein aggregates by DnaK. Necessary for thermotolerance. In Synechococcus elongatus (strain ATCC 33912 / PCC 7942 / FACHB-805) (Anacystis nidulans R2), this protein is Chaperone protein ClpB 1 (clpB1).